A 238-amino-acid polypeptide reads, in one-letter code: Nuclear transcription factor Y subunit B-9 (238 aa).

The DNA-binding element occupies 64 to 70 (MPIANVI). The subunit association domain (SAD) stretch occupies residues 91–102 (IQECVSEYISFV). The tract at residues 203–238 (RYYQNGSSGQDESSVGGGSSSSINGMPAFDHYGQYK) is disordered. Low complexity predominate over residues 208 to 227 (GSSGQDESSVGGGSSSSING).

Belongs to the NFYB/HAP3 subunit family. In terms of assembly, heterotrimeric transcription factor composed of three components, NF-YA, NF-YB and NF-YC. NF-YB and NF-YC must interact and dimerize for NF-YA association and DNA binding. Interacts with PRN1. As to expression, expressed in green siliques. Present in etiolated seedlings.

It is found in the nucleus. Its function is as follows. Component of the NF-Y/HAP transcription factor complex. The NF-Y complex stimulates the transcription of various genes by recognizing and binding to a CCAAT motif in promoters. Acts as a central regulator of the embryogenesis. Required for the speciation of cotyledon identity and the completion of embryo maturation. Controls seed storage protein genes through the regulation of FUS3 and ABI3. Involved in the blue light (BL) and abscisic acid (ABA) signaling pathways. This is Nuclear transcription factor Y subunit B-9 (NFYB9) from Arabidopsis thaliana (Mouse-ear cress).